A 350-amino-acid chain; its full sequence is Chorismate synthase (350 aa).

R48 contributes to the NADP(+) binding site. Residues R125–S127, G277, K292–S296, and R318 contribute to the FMN site.

Belongs to the chorismate synthase family. Homotetramer. The cofactor is FMNH2.

It carries out the reaction 5-O-(1-carboxyvinyl)-3-phosphoshikimate = chorismate + phosphate. Its pathway is metabolic intermediate biosynthesis; chorismate biosynthesis; chorismate from D-erythrose 4-phosphate and phosphoenolpyruvate: step 7/7. In terms of biological role, catalyzes the anti-1,4-elimination of the C-3 phosphate and the C-6 proR hydrogen from 5-enolpyruvylshikimate-3-phosphate (EPSP) to yield chorismate, which is the branch point compound that serves as the starting substrate for the three terminal pathways of aromatic amino acid biosynthesis. This reaction introduces a second double bond into the aromatic ring system. The sequence is that of Chorismate synthase from Maridesulfovibrio salexigens (strain ATCC 14822 / DSM 2638 / NCIMB 8403 / VKM B-1763) (Desulfovibrio salexigens).